Reading from the N-terminus, the 473-residue chain is Nuclear distribution protein PAC1 (473 aa).

One can recognise a LisH domain in the interval 9 to 41 (QAEELHKSIIAYFLSAKLPKSAAALREEIADSV). Residues 60–87 (TSVVRLQKKIMDLEARNSALQSELDSAT) are a coiled coil. Residues 80–93 (QSELDSATPTSLSR) are compositionally biased toward polar residues. Residues 80-99 (QSELDSATPTSLSRRNQDPV) are disordered. 8 WD repeats span residues 113–154 (SHRN…RTIK), 156–196 (HTRA…KNIR), 200–247 (GHDH…CVRT), 250–289 (GHVE…TKST), 292–352 (GHEH…IKTL), 354–393 (GHDN…KCVR), 397–434 (DAHA…ALSG), and 435–472 (VNGI…RVFA).

It belongs to the WD repeat LIS1/nudF family. As to quaternary structure, self-associates. Interacts with NDL1 and dynein.

It localises to the cytoplasm. It is found in the cytoskeleton. Its subcellular location is the spindle pole. Its function is as follows. Positively regulates the activity of the minus-end directed microtubule motor protein dynein. May enhance dynein-mediated microtubule sliding by targeting dynein to the microtubule plus end. Required for nuclear migration during vegetative growth as well as development. Required for retrograde early endosome (EE) transport from the hyphal tip. Required for localization of dynein to the mitotic spindle poles. Recruits additional proteins to the dynein complex at SPBs. This chain is Nuclear distribution protein PAC1, found in Ajellomyces dermatitidis (strain ER-3 / ATCC MYA-2586) (Blastomyces dermatitidis).